Here is a 335-residue protein sequence, read N- to C-terminus: MIEADRIISGQAKVDEDVIDRAIRPKLLADYVGQPQVREQMDIFIKAAKLRQDALDHLLIFGPPGLGKTTLANIVANEMGVNIRTTSGPVLEKAGDLAAMLTNLEPHDVLFIDEIHRLSPAIEEVLYPAMEDYQLDIMIGEGPAARSIKLDLPPFTLVGATTRAGSLTSPLRDRFGIVQRLEFYSVEDLTSIVARSAGCLNLELEQQAAFEVARRSRGTPRIANRLLRRVRDYADVRNGGVISVDVAKQALSMLDVDDAGFDYLDRKLLSAVIERFDGGPVGLDNLAAAIGEERDTIEDVLEPYLIQQGFLQRTPRGRIATSKTYRHFGLQKLSD.

Positions 4–184 (ADRIISGQAK…FGIVQRLEFY (181 aa)) are large ATPase domain (RuvB-L). Residues isoleucine 23, arginine 24, glycine 65, lysine 68, threonine 69, threonine 70, 131–133 (EDY), arginine 174, tyrosine 184, and arginine 221 each bind ATP. Threonine 69 serves as a coordination point for Mg(2+). The small ATPAse domain (RuvB-S) stretch occupies residues 185–255 (SVEDLTSIVA…VAKQALSMLD (71 aa)). Residues 258-335 (DAGFDYLDRK…RHFGLQKLSD (78 aa)) form a head domain (RuvB-H) region. Arginine 294, arginine 313, and arginine 318 together coordinate DNA.

It belongs to the RuvB family. In terms of assembly, homohexamer. Forms an RuvA(8)-RuvB(12)-Holliday junction (HJ) complex. HJ DNA is sandwiched between 2 RuvA tetramers; dsDNA enters through RuvA and exits via RuvB. An RuvB hexamer assembles on each DNA strand where it exits the tetramer. Each RuvB hexamer is contacted by two RuvA subunits (via domain III) on 2 adjacent RuvB subunits; this complex drives branch migration. In the full resolvosome a probable DNA-RuvA(4)-RuvB(12)-RuvC(2) complex forms which resolves the HJ.

The protein localises to the cytoplasm. The enzyme catalyses ATP + H2O = ADP + phosphate + H(+). Its function is as follows. The RuvA-RuvB-RuvC complex processes Holliday junction (HJ) DNA during genetic recombination and DNA repair, while the RuvA-RuvB complex plays an important role in the rescue of blocked DNA replication forks via replication fork reversal (RFR). RuvA specifically binds to HJ cruciform DNA, conferring on it an open structure. The RuvB hexamer acts as an ATP-dependent pump, pulling dsDNA into and through the RuvAB complex. RuvB forms 2 homohexamers on either side of HJ DNA bound by 1 or 2 RuvA tetramers; 4 subunits per hexamer contact DNA at a time. Coordinated motions by a converter formed by DNA-disengaged RuvB subunits stimulates ATP hydrolysis and nucleotide exchange. Immobilization of the converter enables RuvB to convert the ATP-contained energy into a lever motion, pulling 2 nucleotides of DNA out of the RuvA tetramer per ATP hydrolyzed, thus driving DNA branch migration. The RuvB motors rotate together with the DNA substrate, which together with the progressing nucleotide cycle form the mechanistic basis for DNA recombination by continuous HJ branch migration. Branch migration allows RuvC to scan DNA until it finds its consensus sequence, where it cleaves and resolves cruciform DNA. This is Holliday junction branch migration complex subunit RuvB from Haemophilus influenzae (strain PittEE).